The chain runs to 115 residues: Large ribosomal subunit protein bL20 (115 aa).

The protein belongs to the bacterial ribosomal protein bL20 family.

Its function is as follows. Binds directly to 23S ribosomal RNA and is necessary for the in vitro assembly process of the 50S ribosomal subunit. It is not involved in the protein synthesizing functions of that subunit. This chain is Large ribosomal subunit protein bL20, found in Prochlorococcus marinus (strain AS9601).